The following is a 166-amino-acid chain: Dynein regulatory complex protein 8 (166 aa).

The EF-hand domain maps to 95-130 (DDYHTLLRAFRAFDPDGRGFIDAESFKSLLTGKGEA).

This sequence belongs to the DRC8 family. As to quaternary structure, component of the nexin-dynein regulatory complex (N-DRC).

Its subcellular location is the cytoplasm. The protein resides in the cytoskeleton. It localises to the flagellum axoneme. Functionally, component of the nexin-dynein regulatory complex (N-DRC), a key regulator of ciliary/flagellar motility which maintains the alignment and integrity of the distal axoneme and regulates microtubule sliding in motile axonemes. This chain is Dynein regulatory complex protein 8, found in Chlamydomonas reinhardtii (Chlamydomonas smithii).